We begin with the raw amino-acid sequence, 344 residues long: Dihydroorotate dehydrogenase (quinone) (344 aa).

FMN is bound by residues 65-69 (AGFDK) and threonine 89. A substrate-binding site is contributed by lysine 69. 114 to 118 (NRMGF) lines the substrate pocket. The FMN site is built by asparagine 145 and asparagine 178. Asparagine 178 serves as a coordination point for substrate. The active-site Nucleophile is the serine 181. Asparagine 183 contacts substrate. The FMN site is built by lysine 215 and threonine 243. Position 244–245 (244–245 (NT)) interacts with substrate. FMN is bound by residues glycine 269, glycine 298, and 319–320 (YT).

This sequence belongs to the dihydroorotate dehydrogenase family. Type 2 subfamily. As to quaternary structure, monomer. FMN is required as a cofactor.

It localises to the cell membrane. The catalysed reaction is (S)-dihydroorotate + a quinone = orotate + a quinol. It functions in the pathway pyrimidine metabolism; UMP biosynthesis via de novo pathway; orotate from (S)-dihydroorotate (quinone route): step 1/1. In terms of biological role, catalyzes the conversion of dihydroorotate to orotate with quinone as electron acceptor. The protein is Dihydroorotate dehydrogenase (quinone) of Clavibacter michiganensis subsp. michiganensis (strain NCPPB 382).